A 296-amino-acid polypeptide reads, in one-letter code: Non-homologous end joining protein Ku (296 aa).

In terms of domain architecture, Ku spans 11–187; it reads TFGLVNIPVK…ELPEAGEPSS (177 aa). Residues 254–296 are disordered; sequence AAARRRGDEHEAPARGERRHAAAAAARTTGRPRAARASRKKRG. The segment covering 258 to 273 has biased composition (basic and acidic residues); the sequence is RRGDEHEAPARGERRH. Residues 275 to 285 are compositionally biased toward low complexity; sequence AAAAARTTGRP. A compositionally biased stretch (basic residues) spans 286-296; it reads RAARASRKKRG.

This sequence belongs to the prokaryotic Ku family. Homodimer. Interacts with LigD.

Functionally, with LigD forms a non-homologous end joining (NHEJ) DNA repair enzyme, which repairs dsDNA breaks with reduced fidelity. Binds linear dsDNA with 5'- and 3'- overhangs but not closed circular dsDNA nor ssDNA. Recruits and stimulates the ligase activity of LigD. The protein is Non-homologous end joining protein Ku of Anaeromyxobacter sp. (strain K).